The sequence spans 396 residues: L-lactate dehydrogenase (396 aa).

The FMN hydroxy acid dehydrogenase domain occupies 1 to 380; sequence MIISAASDYR…TQDSLVQGLG (380 aa). A substrate-binding site is contributed by Y24. S106 and Q127 together coordinate FMN. A substrate-binding site is contributed by Y129. Residue T155 coordinates FMN. R164 contacts substrate. K251 contacts FMN. H275 serves as the catalytic Proton acceptor. Residue R278 participates in substrate binding. 306–330 contributes to the FMN binding site; it reads DSGIRNGLDVVRMIALGADTVLLGR.

It belongs to the FMN-dependent alpha-hydroxy acid dehydrogenase family. Requires FMN as cofactor.

The protein resides in the cell inner membrane. It carries out the reaction (S)-lactate + A = pyruvate + AH2. Catalyzes the conversion of L-lactate to pyruvate. Is coupled to the respiratory chain. The polypeptide is L-lactate dehydrogenase (Shigella boydii serotype 18 (strain CDC 3083-94 / BS512)).